Consider the following 258-residue polypeptide: Phosphate import ATP-binding protein PstB (258 aa).

Residues 5–247 (LDLKDVNIYY…EKIFSNPTQK (243 aa)) enclose the ABC transporter domain. 37 to 44 (GPSGCGKS) lines the ATP pocket.

The protein belongs to the ABC transporter superfamily. Phosphate importer (TC 3.A.1.7) family. As to quaternary structure, the complex is composed of two ATP-binding proteins (PstB), two transmembrane proteins (PstC and PstA) and a solute-binding protein (PstS).

Its subcellular location is the cell membrane. It catalyses the reaction phosphate(out) + ATP + H2O = ADP + 2 phosphate(in) + H(+). Part of the ABC transporter complex PstSACB involved in phosphate import. Responsible for energy coupling to the transport system. The polypeptide is Phosphate import ATP-binding protein PstB (Rhodococcus jostii (strain RHA1)).